Reading from the N-terminus, the 348-residue chain is GTPase Obg 1 (348 aa).

The Obg domain maps to 1–159; it reads MSFVDEAKIH…HCVLLKLKIV (159 aa). An OBG-type G domain is found at 160 to 329; it reads SDVGIIGMPN…LHAQVKKAVV (170 aa). GTP contacts are provided by residues 166–173, 191–195, 212–215, 279–282, and 310–312; these read GMPNAGKS, FTTLE, DIPG, NKCD, and GDE. Positions 173 and 193 each coordinate Mg(2+).

This sequence belongs to the TRAFAC class OBG-HflX-like GTPase superfamily. OBG GTPase family. Monomer. The cofactor is Mg(2+).

The protein localises to the cytoplasm. Functionally, an essential GTPase which binds GTP, GDP and possibly (p)ppGpp with moderate affinity, with high nucleotide exchange rates and a fairly low GTP hydrolysis rate. Plays a role in control of the cell cycle, stress response, ribosome biogenesis and in those bacteria that undergo differentiation, in morphogenesis control. This Anaplasma marginale (strain Florida) protein is GTPase Obg 1.